Reading from the N-terminus, the 1408-residue chain is Protein patched homolog 1 (1408 aa).

A disordered region spans residues 1-20 (MLTLLEPPGAKRSPTVGNYN). Over 1 to 136 (MLTLLEPPGA…GNTVHRNAWS (136 aa)) the chain is Cytoplasmic. Residues 137-157 (IILAVSMIFAVCCYGLQYVHI) traverse the membrane as a helical segment. The Extracellular portion of the chain corresponds to 158–649 (ETDIVKLWVA…STSIADMLEE (492 aa)). Positions 455 to 479 (STAPIPTTTTLSPEEARAAEEKEKK) are disordered. The span at 468–479 (EEARAAEEKEKK) shows a compositional bias: basic and acidic residues. N-linked (GlcNAc...) asparagine glycosylation occurs at N599. The chain crosses the membrane as a helical span at residues 650 to 670 (FCQFNYTIILAGYALMLAYAI). The SSD domain maps to 654-816 (NYTIILAGYA…LTIYPAIISI (163 aa)). Topologically, residues 671-686 (VTQARFDNCLPATESS) are cytoplasmic. The helical transmembrane segment at 687–707 (MGLALAGVLVVTFASVAGLGL) threads the bilayer. Residues 708–709 (AT) lie on the Extracellular side of the membrane. Residues 710–730 (WFGIEFNAATTQIVPFLTLGI) traverse the membrane as a helical segment. At 731 to 765 (GVDNMFMLLHNYRDVVKLAGGHAEMAILMRETGMS) the chain is on the cytoplasmic side. Residues 766-786 (ILCTSINNILSFLTGTLLPIP) form a helical membrane-spanning segment. At 787–795 (ALRSFCAQS) the chain is on the extracellular side. A helical transmembrane segment spans residues 796–816 (SILLTFNFIAILTIYPAIISI). The Cytoplasmic portion of the chain corresponds to 817–901 (DLRRKKAQRR…YYYIPFISKP (85 aa)). Residues 902–922 (ASKVAIIVGCCALLGASFIGM) traverse the membrane as a helical segment. Residues 923-1175 (RQSTLGLELG…QGIAFTFWEQ (253 aa)) are Extracellular-facing. N-linked (GlcNAc...) asparagine glycans are attached at residues N1026 and N1036. A helical membrane pass occupies residues 1176–1196 (YLFLTGNLMQAISIITISVFC). The Cytoplasmic portion of the chain corresponds to 1197–1217 (VISVLLFNPWAALMVVCILGI). 2 consecutive transmembrane segments (helical) span residues 1218–1238 (MTCE…PVSA) and 1239–1259 (VTLI…VVSF). Topologically, residues 1260-1276 (LTALGTRSQRTSSAVDR) are extracellular. Residues 1277 to 1297 (VFVPVIHGSFSTLLGILMLGF) form a helical membrane-spanning segment. At 1298–1305 (SEFEFVVK) the chain is on the cytoplasmic side. Residues 1306–1326 (YFFIVMTALICIGIINGLILL) traverse the membrane as a helical segment. Residues 1327 to 1408 (PVLLSWFGPR…GNNTRRLPAV (82 aa)) lie on the Extracellular side of the membrane. Residues 1342–1408 (TGGKTTLTLP…GNNTRRLPAV (67 aa)) form a disordered region. Residues 1387 to 1408 (TTRTSGGNRGTVGNNTRRLPAV) are compositionally biased toward low complexity.

Belongs to the patched family. Germ line and its progenitors.

It localises to the membrane. Required but not essential for cytokinesis of mitotically proliferating germ cells. This is Protein patched homolog 1 (ptc-1) from Caenorhabditis elegans.